Here is a 349-residue protein sequence, read N- to C-terminus: Protein-glutamate methylesterase/protein-glutamine glutaminase 1 (349 aa).

In terms of domain architecture, Response regulatory spans R4–R119. D53 bears the 4-aspartylphosphate mark. One can recognise a CheB-type methylesterase domain in the interval P159–R349. Active-site residues include S172, H198, and D293.

It belongs to the CheB family. Phosphorylated by CheA. Phosphorylation of the N-terminal regulatory domain activates the methylesterase activity.

Its subcellular location is the cytoplasm. It catalyses the reaction [protein]-L-glutamate 5-O-methyl ester + H2O = L-glutamyl-[protein] + methanol + H(+). The enzyme catalyses L-glutaminyl-[protein] + H2O = L-glutamyl-[protein] + NH4(+). Its function is as follows. Involved in chemotaxis. Part of a chemotaxis signal transduction system that modulates chemotaxis in response to various stimuli. Catalyzes the demethylation of specific methylglutamate residues introduced into the chemoreceptors (methyl-accepting chemotaxis proteins or MCP) by CheR. Also mediates the irreversible deamidation of specific glutamine residues to glutamic acid. The protein is Protein-glutamate methylesterase/protein-glutamine glutaminase 1 of Anaeromyxobacter dehalogenans (strain 2CP-C).